We begin with the raw amino-acid sequence, 117 residues long: Large ribosomal subunit protein bL20c (117 aa).

It belongs to the bacterial ribosomal protein bL20 family.

It is found in the plastid. Its subcellular location is the chloroplast. Binds directly to 23S ribosomal RNA and is necessary for the in vitro assembly process of the 50S ribosomal subunit. It is not involved in the protein synthesizing functions of that subunit. The chain is Large ribosomal subunit protein bL20c from Ceratophyllum demersum (Rigid hornwort).